The following is a 1029-amino-acid chain: Error-prone DNA polymerase (1029 aa).

The protein belongs to the DNA polymerase type-C family. DnaE2 subfamily.

It localises to the cytoplasm. The enzyme catalyses DNA(n) + a 2'-deoxyribonucleoside 5'-triphosphate = DNA(n+1) + diphosphate. Its function is as follows. DNA polymerase involved in damage-induced mutagenesis and translesion synthesis (TLS). It is not the major replicative DNA polymerase. The polypeptide is Error-prone DNA polymerase (Saccharophagus degradans (strain 2-40 / ATCC 43961 / DSM 17024)).